We begin with the raw amino-acid sequence, 430 residues long: Glutamate-1-semialdehyde 2,1-aminomutase (430 aa).

At lysine 267 the chain carries N6-(pyridoxal phosphate)lysine.

Belongs to the class-III pyridoxal-phosphate-dependent aminotransferase family. HemL subfamily. Homodimer. It depends on pyridoxal 5'-phosphate as a cofactor.

The protein resides in the cytoplasm. The enzyme catalyses (S)-4-amino-5-oxopentanoate = 5-aminolevulinate. Its pathway is porphyrin-containing compound metabolism; protoporphyrin-IX biosynthesis; 5-aminolevulinate from L-glutamyl-tRNA(Glu): step 2/2. The polypeptide is Glutamate-1-semialdehyde 2,1-aminomutase (Thermomicrobium roseum (strain ATCC 27502 / DSM 5159 / P-2)).